Here is a 140-residue protein sequence, read N- to C-terminus: Cystatin-like 1 (140 aa).

The first 23 residues, 1–23 (MEMKARGLRIPLLLLLVTVVVMA), serve as a signal peptide directing secretion. Residues 32–126 (GGFKEKAMSK…CKSLIYSVPW (95 aa)) enclose the Cystatin domain. A glycan (N-linked (GlcNAc...) asparagine) is linked at N45. Intrachain disulfides connect C94–C104 and C117–C137.

Belongs to the cystatin family. Highly expressed in testis where it localizes to spermatogonium, spermatocyes and round spermatids. Not detected in spermatozoa. Also detected in epididymis, cerebrum and pituitary.

The protein resides in the secreted. The chain is Cystatin-like 1 from Mus musculus (Mouse).